The chain runs to 312 residues: R2-like ligand binding oxidase (312 aa).

Mn(2+) is bound by residues E68, E101, and H104. The 3-(O4'-tyrosyl)-valine (Val-Tyr) cross-link spans 71 to 162 (VTQDIQPFMA…QAQVRASVTY (92 aa)). Residue E101 coordinates Fe cation. 3 residues coordinate Fe cation: E167, E202, and H205.

The protein belongs to the ribonucleoside diphosphate reductase small chain family. R2-like ligand binding oxidase subfamily. As to quaternary structure, homodimer. Requires Fe cation as cofactor. The cofactor is Mn(2+).

Its function is as follows. Probable oxidase that might be involved in lipid metabolism. The protein is R2-like ligand binding oxidase of Mycolicibacterium gilvum (strain PYR-GCK) (Mycobacterium gilvum (strain PYR-GCK)).